A 244-amino-acid polypeptide reads, in one-letter code: ATP synthase subunit a (244 aa).

Transmembrane regions (helical) follow at residues Ile25–Phe45, Tyr85–Ile105, Ile115–Met135, Leu144–Ile164, Gly193–Leu213, and Leu216–Leu236.

It belongs to the ATPase A chain family. As to quaternary structure, F-type ATPases have 2 components, CF(1) - the catalytic core - and CF(0) - the membrane proton channel. CF(1) has five subunits: alpha(3), beta(3), gamma(1), delta(1), epsilon(1). CF(0) has three main subunits: a(1), b(2) and c(9-12). The alpha and beta chains form an alternating ring which encloses part of the gamma chain. CF(1) is attached to CF(0) by a central stalk formed by the gamma and epsilon chains, while a peripheral stalk is formed by the delta and b chains.

It is found in the cell inner membrane. Functionally, key component of the proton channel; it plays a direct role in the translocation of protons across the membrane. This chain is ATP synthase subunit a, found in Pelagibacter ubique (strain HTCC1062).